The primary structure comprises 420 residues: Serine hydroxymethyltransferase (420 aa).

Residues L121 and 125-127 (GHL) each bind (6S)-5,6,7,8-tetrahydrofolate. At K230 the chain carries N6-(pyridoxal phosphate)lysine. (6S)-5,6,7,8-tetrahydrofolate contacts are provided by residues E246 and 354–356 (SPF).

The protein belongs to the SHMT family. Homodimer. It depends on pyridoxal 5'-phosphate as a cofactor.

The protein localises to the cytoplasm. It catalyses the reaction (6R)-5,10-methylene-5,6,7,8-tetrahydrofolate + glycine + H2O = (6S)-5,6,7,8-tetrahydrofolate + L-serine. Its pathway is one-carbon metabolism; tetrahydrofolate interconversion. It participates in amino-acid biosynthesis; glycine biosynthesis; glycine from L-serine: step 1/1. Its function is as follows. Catalyzes the reversible interconversion of serine and glycine with tetrahydrofolate (THF) serving as the one-carbon carrier. This reaction serves as the major source of one-carbon groups required for the biosynthesis of purines, thymidylate, methionine, and other important biomolecules. Also exhibits THF-independent aldolase activity toward beta-hydroxyamino acids, producing glycine and aldehydes, via a retro-aldol mechanism. The protein is Serine hydroxymethyltransferase of Rickettsia akari (strain Hartford).